We begin with the raw amino-acid sequence, 3010 residues long: Genome polyprotein (3010 aa).

At S2 the chain carries N-acetylserine; by host. The interval 2–23 is interaction with STAT1; sequence STNGKPQRKTKRNTNRRPQDVK. The interval 2 to 58 is interaction with EIF2AK2/PKR; it reads STNGKPQRKTKRNTNRRPQDVKFPGGGQIVGGVYLLPRRGPRLGVRATRKTWERSQP. The interval 2-59 is interaction with DDX3X; the sequence is STNGKPQRKTKRNTNRRPQDVKFPGGGQIVGGVYLLPRRGPRLGVRATRKTWERSQPR. The segment at 2–75 is disordered; it reads STNGKPQRKT…PKARQPEGRA (74 aa). Topologically, residues 2-168 are cytoplasmic; it reads STNGKPQRKT…EDGVNYATGN (167 aa). Short sequence motifs (nuclear localization signal) lie at residues 5–13, 38–43, 58–64, and 66–71; these read GKPQRKTKR, PRRGPR, PRGRRQP, and PKARQP. The span at 7-16 shows a compositional bias: basic residues; the sequence is PQRKTKRNTN. S99 is modified (phosphoserine; by host). Residues 112 to 152 are important for endoplasmic reticulum and mitochondrial localization; the sequence is PRRRSRNLGKVIDTLTCGFADLMGYIPLVGAPLGGVARALA. S116 is modified (phosphoserine; by host PKA). An interaction with APOA2 region spans residues 122-173; that stretch reads VIDTLTCGFADLMGYIPLVGAPLGGVARALAHGVRVLEDGVNYATGNLPGCS. The interval 164–167 is important for lipid droplets localization; sequence YATG. Residues 169 to 189 form a helical membrane-spanning segment; that stretch reads LPGCSFSIFLLALLSCLTIPA. Positions 178-191 are cleaved as a propeptide — ER anchor for the core protein, removed in mature form by host signal peptidase; the sequence is LLALLSCLTIPASA. At 190 to 358 the chain is on the lumenal side; the sequence is SAYEVHNVSG…GGAHWGVLAG (169 aa). N196, N209, N234, and N250 each carry an N-linked (GlcNAc...) asparagine; by host glycan. An important for fusion region spans residues 265 to 296; that stretch reads LVGAAAFCSAMYVGDLCGSVFLVSQLFTFSPR. N-linked (GlcNAc...) asparagine; by host glycosylation occurs at N305. Residues 359–379 traverse the membrane as a helical segment; that stretch reads LAYYSMVGNWAKVLIVMLLFA. Over 380-725 the chain is Lumenal; that stretch reads GVDGSTIVSG…WEYILLLFLL (346 aa). Residues 385–411 form an HVR1 region; it reads TIVSGGTVARTTHSLASLFTQGASQKI. N-linked (GlcNAc...) (high mannose) asparagine; by host glycans are attached at residues N417, N423, N430, and N448. Intrachain disulfides connect C429–C552, C452–C459, C486–C494, and C503–C508. The HVR2 stretch occupies residues 474-479; sequence YTEADI. The interval 480-493 is CD81-binding 1; it reads QDQRPYCWHYAPRP. N532 is a glycosylation site (N-linked (GlcNAc...) (high mannose) asparagine; by host). N540 carries N-linked (GlcNAc...) asparagine; by host glycosylation. Positions 544 to 551 are CD81-binding 2; it reads PPQGNWFG. N-linked (GlcNAc...) (high mannose) asparagine; by host glycosylation occurs at N556. A disulfide bridge links C564 with C569. N-linked (GlcNAc...) (high mannose) asparagine; by host glycosylation is present at N576. Cystine bridges form between C581/C585, C597/C620, and C607/C644. N623 and N645 each carry an N-linked (GlcNAc...) (high mannose) asparagine; by host glycan. An intrachain disulfide couples C652 to C677. Residues 660-671 form a PKR/eIF2-alpha phosphorylation homology domain (PePHD) region; it reads SELSPLLLSTTE. Residues 726-746 form a helical membrane-spanning segment; the sequence is LADARVCACLWMMLLIAQAEA. Residues 747–757 lie on the Lumenal side of the membrane; it reads ALENLVVFNAA. The helical transmembrane segment at 758–778 threads the bilayer; it reads SVAGMHGTLSFLVFFCAAWYI. Residues 779-781 lie on the Cytoplasmic side of the membrane; that stretch reads KGR. The helical transmembrane segment at 782 to 803 threads the bilayer; that stretch reads LVPGAAYALYGVWPLLLLLLAL. Residues 804-813 lie on the Lumenal side of the membrane; it reads PPRAYAMDRE. Residues 814-834 traverse the membrane as a helical segment; that stretch reads MAASCGGAVFVGLVLLTLSPH. Over 835-838 the chain is Cytoplasmic; the sequence is YKMF. A helical transmembrane segment spans residues 839–859; that stretch reads LARLIWWLQYFITRAEAHLQV. Topologically, residues 860 to 881 are lumenal; the sequence is WIPPLNVRGGRDAIILLTCAAY. A helical transmembrane segment spans residues 882–902; that stretch reads PELIFDITKILLAILGPLMVL. The Peptidase C18 domain occupies 903–1026; the sequence is QAGLTRIPYF…SLEGRGWRLL (124 aa). At 903–1657 the chain is on the cytoplasmic side; that stretch reads QAGLTRIPYF…CMSADLEVVT (755 aa). Residues 904-1206 are protease NS2-3; it reads AGLTRIPYFV…PVESMETTMR (303 aa). A lipid anchor (S-palmitoyl cysteine; by host) is attached at C922. Positions 929 to 949 are interaction with host SCPS1; the sequence is AGGHYVQMALMKLAALTGTYV. Residues H952, E972, and C993 each act as for protease NS2 activity; shared with dimeric partner in the active site. One can recognise a Peptidase S29 domain in the interval 1027-1208; the sequence is APITAYAQQT…ESMETTMRSP (182 aa). Catalysis depends on charge relay system; for serine protease NS3 activity residues H1083 and D1107. Positions 1123 and 1125 each coordinate Zn(2+). S1165 functions as the Charge relay system; for serine protease NS3 activity in the catalytic mechanism. Positions 1171 and 1175 each coordinate Zn(2+). In terms of domain architecture, Helicase ATP-binding spans 1217–1369; it reads PAVPQAFQVA…PNIEEIALSN (153 aa). 1230 to 1237 lines the ATP pocket; sequence APTGSGKS. The Mg(2+) site is built by S1237 and E1317. The DECH box signature appears at 1316 to 1319; that stretch reads DECH. Positions 1486 to 1497 are RNA-binding; that stretch reads QRRGRTSRGRRG. The helical transmembrane segment at 1658-1678 threads the bilayer; the sequence is STWVLVGGVLAALAAYCLTTG. An NS3-binding region spans residues 1679–1690; that stretch reads SVVIVGRIILSG. Over 1679 to 1805 the chain is Cytoplasmic; the sequence is SVVIVGRIIL…SITSPLTTQS (127 aa). The helical transmembrane segment at 1806-1824 threads the bilayer; it reads TLLFNILGGWVAAQLAPPG. The Lumenal segment spans residues 1825–1828; that stretch reads AASA. A helical membrane pass occupies residues 1829-1849; that stretch reads FVGAGIAGAAVGSIGLGKVLV. Residue D1850 is a topological domain, cytoplasmic. A helical transmembrane segment spans residues 1851–1871; it reads MVAGYGAGVAGALVAFKVMSG. Residues 1872–1881 are Lumenal-facing; it reads EMPSTEDLVN. A helical membrane pass occupies residues 1882-1902; sequence LLPAILSPGALVVGVVCAAIL. The Cytoplasmic segment spans residues 1903–1972; the sequence is RRHVDPGEGA…WINEDCSTPC (70 aa). S-palmitoyl cysteine; by host attachment occurs at residues C1968 and C1972. An intramembrane segment occupies 1973-2002; the sequence is SGSWLRDVWDWICTVLADFKTWLQSKLLPR. The Cytoplasmic portion of the chain corresponds to 2003–2989; that stretch reads LPGVPFFSCQ…YHSLSRARPR (987 aa). Zn(2+) contacts are provided by C2011, C2029, C2031, and C2052. An FKBP8-binding region spans residues 2120 to 2208; sequence EFFTEVDGVR…ASSSASQLSA (89 aa). The interval 2120–2332 is transcriptional activation; it reads EFFTEVDGVR…PIPPPRRKRT (213 aa). The interaction with non-structural protein 4A stretch occupies residues 2135-2139; sequence PACKP. An interaction with host SKP2 region spans residues 2189-2441; that stretch reads RLARGSPPSL…PCAAEESKLP (253 aa). The residue at position 2194 (S2194) is a Phosphoserine; by host; in p56. Residues S2197, S2201, S2204, S2207, and S2210 each carry the phosphoserine; by host; in p58 modification. Positions 2210 to 2249 are ISDR; that stretch reads SLKAACTTRHTPPDADLIEANLLWRQEMGGNITRVESENK. An interaction with EIF2AK2/PKR region spans residues 2210–2275; it reads SLKAACTTRH…REVSVPAEIL (66 aa). The interval 2249-2306 is NS4B-binding; it reads KVVILDSFDPLRAEEDEREVSVPAEILRKSRKFPPALPVWARPDYNPPLLEPWKDPDY. An SH3-binding motif is present at residues 2322–2325; sequence PPIP. Positions 2326–2334 match the Nuclear localization signal motif; it reads PPRRKRTVV. Residue K2350 forms a Glycyl lysine isopeptide (Lys-Gly) (interchain with G-Cter in ubiquitin) linkage. The span at 2351 to 2367 shows a compositional bias: low complexity; sequence TFGSSESSAAGSGTATA. The disordered stretch occupies residues 2351-2409; it reads TFGSSESSAAGSGTATAPPDQPSDDGDAGSDVESCSSMPPLEGEPGDPDLSDGSWSTVS. Residues 2354–2377 are V3; sequence SSESSAAGSGTATAPPDQPSDDGD. Phosphoserine; by host occurs at positions 2448 and 2461. The region spanning 2633 to 2751 is the RdRp catalytic domain; that stretch reads PMGFSYDTRC…ICESAGTQED (119 aa). Residues D2639, D2737, and D2738 each coordinate Mg(2+). The chain crosses the membrane as a helical span at residues 2990-3010; it reads WFMLCLLLLSVGVGIYLLPNR.

It belongs to the hepacivirus polyprotein family. Homooligomer. Interacts with E1 (via C-terminus). Interacts with the non-structural protein 5A. Interacts (via N-terminus) with host STAT1 (via SH2 domain); this interaction results in decreased STAT1 phosphorylation and ubiquitin-mediated proteasome-dependent STAT1 degradation, leading to decreased IFN-stimulated gene transcription. Interacts with host STAT3; this interaction constitutively activates STAT3. Interacts with host LTBR receptor. Interacts with host TNFRSF1A receptor and possibly induces apoptosis. Interacts with host HNRPK. Interacts with host YWHAE. Interacts with host UBE3A/E6AP. Interacts with host DDX3X. Interacts with host APOA2. Interacts with host RXRA protein. Interacts with host SP110 isoform 3/Sp110b; this interaction sequesters the transcriptional corepressor SP110 away from the nucleus. Interacts with host CREB3 nuclear transcription protein; this interaction triggers cell transformation. Interacts with host ACY3. Interacts with host C1QR1. Interacts with host RBM24; this interaction, which enhances the interaction of the mature core protein with 5'-UTR, may inhibit viral translation and favor replication. Interacts with host EIF2AK2/PKR; this interaction induces the autophosphorylation of EIF2AK2. Part of the viral assembly initiation complex composed of NS2, E1, E2, NS3, NS4A, NS5A and the mature core protein. As to quaternary structure, forms a heterodimer with envelope glycoprotein E2. Interacts with mature core protein. Interacts with protease NS2. The heterodimer E1/E2 interacts with host CLDN1; this interaction plays a role in viral entry into host cell. Interacts with host SPSB2 (via C-terminus). Part of the viral assembly initiation complex composed of NS2, E1, E2, NS3, NS4A, NS5A and the mature core protein. Interacts with host NEURL3; this interaction prevents E1 binding to glycoprotein E2. In terms of assembly, forms a heterodimer with envelope glycoprotein E1. Interacts with host CD81 and SCARB1 receptors; these interactions play a role in viral entry into host cell. Interacts with host EIF2AK2/PKR; this interaction inhibits EIF2AK2 and probably allows the virus to evade the innate immune response. Interacts with host CD209/DC-SIGN and CLEC4M/DC-SIGNR. Interact with host SPCS1; this interaction is essential for viral particle assembly. Interacts with protease NS2. The heterodimer E1/E2 interacts with host CLDN1; this interaction plays a role in viral entry into host cell. Part of the viral assembly initiation complex composed of NS2, E1, E2, NS3, NS4A, NS5A and the mature core protein. Interacts with host SLC3A2/4F2hc; the interaction may facilitate viral entry into host cell. Interacts with human PLSCR1. Homohexamer. Homoheptamer. Interacts with protease NS2. As to quaternary structure, homodimer. Interacts with host SPCS1; this interaction is essential for viral particle assembly. Interacts with envelope glycoprotein E1. Interacts with envelope glycoprotein E2. Interacts with viroporin p7. Interacts with serine protease/helicase NS3. Part of the replication complex composed of NS2, NS3, NS4A, NS4B, NS5A and the RNA-directed RNA polymerase embedded in an ER-derived membranous web. Part of the viral assembly initiation complex composed of NS2, E1, E2, NS3, NS4A, NS5A and the mature core protein. In terms of assembly, interacts with protease NS2. Interacts with non-structural protein 4A; this interaction stabilizes the folding of NS3 serine protease. NS3-NS4A interaction is essential for NS3 activation and allows membrane anchorage of the latter. NS3/NS4A complex also prevents phosphorylation of host IRF3, thus preventing the establishment of dsRNA induced antiviral state. Interacts with host MAVS; this interaction leads to the cleavage and inhibition of host MAVS. Interacts with host TICAM1; this interaction leads to the cleavage and inhibition of host TICAM1. Interacts with host TANK-binding kinase/TBK1; this interaction results in the inhibition of the association between TBK1 and IRF3, which leads to the inhibition of IRF3 activation. Interacts with host RBM24. Part of the replication complex composed of NS2, NS3, NS4A, NS4B, NS5A and the RNA-directed RNA polymerase embedded in an ER-derived membranous web. Part of the viral assembly initiation complex composed of NS2, E1, E2, NS3, NS4A, NS5A and the mature core protein. Interacts with NS3 serine protease; this interaction stabilizes the folding of NS3 serine protease. NS3-NS4A interaction is essential for NS3 activation and allows membrane anchorage of the latter. Interacts with non-structural protein 5A (via N-terminus). Part of the replication complex composed of NS2, NS3, NS4A, NS4B, NS5A and the RNA-directed RNA polymerase embedded in an ER-derived membranous web. Part of the viral assembly initiation complex composed of NS2, E1, E2, NS3, NS4A, NS5A and the mature core protein. As to quaternary structure, homomultimer. Interacts with non-structural protein NS5A. Interacts with host PLA2G4C; this interaction likely initiates the recruitment of replication complexes to lipid droplets. Interacts with host STING; this interaction disrupts the interaction between STING and TBK1 thereby suppressing the interferon signaling. Part of the replication complex composed of NS2, NS3, NS4A, NS4B, NS5A and the RNA-directed RNA polymerase embedded in an ER-derived membranous web. In terms of assembly, monomer. Homodimer; dimerization is required for RNA-binding. Interacts with the mature core protein. Interacts (via N-terminus) with non-structural protein 4A. Interacts with non-structural protein 4B. Interacts (via region D2) with RNA-directed RNA polymerase. Part of the viral assembly initiation complex composed of NS2, E1, E2, NS3, NS4A, NS5A and the mature core protein. Part of the replication complex composed of NS2, NS3, NS4A, NS4B, NS5A and the RNA-directed RNA polymerase embedded in an ER-derived membranous web. Interacts with host GRB2. Interacts with host BIN1. Interacts with host PIK3R1. Interacts with host SRCAP. Interacts with host FKBP8. Interacts (via C-terminus) with host VAPB (via MSP domain). Interacts with host EIF2AK2/PKR; this interaction leads to disruption of EIF2AK2 dimerization by NS5A and probably allows the virus to evade the innate immune response. Interacts (via N-terminus) with host PACSIN2 (via N-terminus); this interaction attenuates protein kinase C alpha-mediated phosphorylation of PACSIN2 by disrupting the interaction between PACSIN2 and PRKCA. Interacts (via N-terminus) with host SRC kinase (via SH2 domain). Interacts with most Src-family kinases. Interacts with host IFI27 and SKP2; promotes the ubiquitin-mediated proteasomal degradation of NS5A. Interacts with host GPS2. Interacts with host TNFRSF21; this interaction allows the modulation by the virus of JNK, p38 MAPK, STAT3, and Akt signaling pathways in a DR6-dependent manner. Interacts (via N-terminus) with host CIDEB (via N-terminus); this interaction seems to regulate the association of HCV particles with APOE. Interacts with host CHKA/Choline Kinase-alpha; CHKA bridges host PI4KA and NS5A and potentiates NS5A-stimulated PI4KA activity, which then facilitates the targeting of the ternary complex to the ER for viral replication. Interacts with host SPSB2 (via C-terminus); this interaction targets NS5A for ubiquitination and degradation. Interacts with host RAB18; this interaction may promote the association of NS5A and other replicase components with lipid droplets. Interacts (via region D2) with host PPIA/CYPA; the interaction stimulates RNA-binding ability of NS5A and is dependent on the peptidyl-prolyl cis-trans isomerase activity of PPIA/CYPA. Interacts with host TRIM14; this interaction induces the degradation of NS5A. Homooligomer. Interacts with non-structural protein 5A. Interacts with host VAPB. Interacts with host PRK2/PKN2. Interacts with host HNRNPA1 and SEPT6; these interactions facilitate viral replication. Part of the replication complex composed of NS2, NS3, NS4A, NS4B, NS5A and the RNA-directed RNA polymerase. Zn(2+) is required as a cofactor. Requires Mg(2+) as cofactor. Specific enzymatic cleavages in vivo yield mature proteins. The structural proteins, core, E1, E2 and p7 are produced by proteolytic processing by host signal peptidases. The core protein precursor is synthesized as a 23 kDa, which is retained in the ER membrane through the hydrophobic signal peptide. Cleavage by the signal peptidase releases the 21 kDa mature core protein. The cleavage of the core protein precursor occurs between aminoacids 176 and 188 but the exact cleavage site is not known. Some degraded forms of the core protein appear as well during the course of infection. The other proteins (p7, NS2, NS3, NS4A, NS4B, NS5A and NS5B) are cleaved by the viral proteases. Autoprocessing between NS2 and NS3 is mediated by the NS2 cysteine protease catalytic domain and regulated by the NS3 N-terminal domain. In terms of processing, phosphorylated by host PKC and PKA. Post-translationally, ubiquitinated; mediated by UBE3A and leading to core protein subsequent proteasomal degradation. Highly N-glycosylated. In terms of processing, palmitoylation is required for NS2/3 autoprocessing and E2 recruitment to membranes. Post-translationally, palmitoylated. This modification may play a role in its polymerization or in protein-protein interactions. Phosphorylated on serines in a basal form termed p56. p58 is a hyperphosphorylated form of p56. p56 and p58 coexist in the cell in roughly equivalent amounts. Hyperphosphorylation is dependent on the presence of NS4A. Host CSNK1A1/CKI-alpha or RPS6KB1 kinases may be responsible for NS5A phosphorylation. In terms of processing, tyrosine phosphorylation is essential for the interaction with host SRC. Post-translationally, the N-terminus is phosphorylated by host PRK2/PKN2. Ubiquitinated. Ubiquitination, most probably at Lys-2350, mediated by host IFI27 and SKP2 leads to proteasomal degradation, restricting viral infection. Ubiquitination by host TRIM22 leads to interruption of viral replication.

It localises to the host endoplasmic reticulum membrane. The protein resides in the host mitochondrion membrane. The protein localises to the virion. Its subcellular location is the host cytoplasm. It is found in the host nucleus. It localises to the host lipid droplet. The protein resides in the virion membrane. The protein localises to the host mitochondrion. Its subcellular location is the host cell membrane. It is found in the host perinuclear region. The catalysed reaction is Hydrolysis of four peptide bonds in the viral precursor polyprotein, commonly with Asp or Glu in the P6 position, Cys or Thr in P1 and Ser or Ala in P1'.. The enzyme catalyses a ribonucleoside 5'-triphosphate + H2O = a ribonucleoside 5'-diphosphate + phosphate + H(+). It carries out the reaction ATP + H2O = ADP + phosphate + H(+). It catalyses the reaction RNA(n) + a ribonucleoside 5'-triphosphate = RNA(n+1) + diphosphate. Its activity is regulated as follows. Inhibited by the antiviral drug hexamethylene amiloride. Inhibition by amantadine appears to be genotype-dependent. Also inhibited by long-alkyl-chain iminosugar derivatives. With respect to regulation, activity is up-regulated by PRK2/PKN2-mediated phosphorylation. Its function is as follows. Packages viral RNA to form a viral nucleocapsid, and promotes virion budding. Participates in the viral particle production as a result of its interaction with the non-structural protein 5A. Binds RNA and may function as a RNA chaperone to induce the RNA structural rearrangements taking place during virus replication. Modulates viral translation initiation by interacting with viral IRES and 40S ribosomal subunit. Affects various cell signaling pathways, host immunity and lipid metabolism. Prevents the establishment of cellular antiviral state by blocking the interferon-alpha/beta (IFN-alpha/beta) and IFN-gamma signaling pathways and by blocking the formation of phosphorylated STAT1 and promoting ubiquitin-mediated proteasome-dependent degradation of STAT1. Activates STAT3 leading to cellular transformation. Regulates the activity of cellular genes, including c-myc and c-fos. May repress the promoter of p53, and sequester CREB3 and SP110 isoform 3/Sp110b in the cytoplasm. Represses cell cycle negative regulating factor CDKN1A, thereby interrupting an important check point of normal cell cycle regulation. Targets transcription factors involved in the regulation of inflammatory responses and in the immune response: suppresses TNF-induced NF-kappa-B activation, and activates AP-1. Binds to dendritic cells (DCs) via C1QR1, resulting in down-regulation of T-lymphocytes proliferation. Alters lipid metabolism by interacting with hepatocellular proteins involved in lipid accumulation and storage. Induces up-regulation of FAS promoter activity, and thereby contributes to the increased triglyceride accumulation in hepatocytes (steatosis). Functionally, forms a heterodimer with envelope glycoprotein E2, which mediates virus attachment to the host cell, virion internalization through clathrin-dependent endocytosis and fusion with host membrane. Fusion with the host cell is most likely mediated by both E1 and E2, through conformational rearrangements of the heterodimer required for fusion rather than a classical class II fusion mechanism. E1/E2 heterodimer binds host apolipoproteins such as APOB and ApoE thereby forming a lipo-viro-particle (LVP). APOE associated to the LVP allows the initial virus attachment to cell surface receptors such as the heparan sulfate proteoglycans (HSPGs), syndecan-1 (SDC1), syndecan-1 (SDC2), the low-density lipoprotein receptor (LDLR) and scavenger receptor class B type I (SCARB1). The cholesterol transfer activity of SCARB1 allows E2 exposure and binding of E2 to SCARB1 and the tetraspanin CD81. E1/E2 heterodimer binding on CD81 activates the epithelial growth factor receptor (EGFR) signaling pathway. Diffusion of the complex E1-E2-EGFR-SCARB1-CD81 to the cell lateral membrane allows further interaction with Claudin 1 (CLDN1) and occludin (OCLN) to finally trigger HCV entry. In terms of biological role, forms a heterodimer with envelope glycoprotein E1, which mediates virus attachment to the host cell, virion internalization through clathrin-dependent endocytosis and fusion with host membrane. Fusion with the host cell is most likely mediated by both E1 and E2, through conformational rearrangements of the heterodimer required for fusion rather than a classical class II fusion mechanism. The interaction between envelope glycoprotein E2 and host apolipoprotein E/APOE allows the proper assembly, maturation and infectivity of the viral particles. This interaction is probably promoted via the up-regulation of cellular autophagy by the virus. E1/E2 heterodimer binds host apolipoproteins such as APOB and APOE thereby forming a lipo-viro-particle (LVP). APOE associated to the LVP allows the initial virus attachment to cell surface receptors such as the heparan sulfate proteoglycans (HSPGs), syndecan-1 (SDC1), syndecan-1 (SDC2), the low-density lipoprotein receptor (LDLR) and scavenger receptor class B type I (SCARB1). The cholesterol transfer activity of SCARB1 allows E2 exposure and binding of E2 to SCARB1 and the tetraspanin CD81. E1/E2 heterodimer binding on CD81 activates the epithelial growth factor receptor (EGFR) signaling pathway. Diffusion of the complex E1-E2-EGFR-SCARB1-CD81 to the cell lateral membrane allows further interaction with Claudin 1 (CLDN1) and occludin (OCLN) to finally trigger HCV entry. Inhibits host EIF2AK2/PKR activation, preventing the establishment of an antiviral state. Viral ligand for CD209/DC-SIGN and CLEC4M/DC-SIGNR, which are respectively found on dendritic cells (DCs), and on liver sinusoidal endothelial cells and macrophage-like cells of lymph node sinuses. These interactions allow the capture of circulating HCV particles by these cells and subsequent facilitated transmission to permissive cells such as hepatocytes and lymphocyte subpopulations. The interaction between E2 and host amino acid transporter complex formed by SLC3A2 and SLC7A5/LAT1 may facilitate viral entry into host cell. Ion channel protein that acts as a viroporin and plays an essential role in the assembly, envelopment and secretion of viral particles. Regulates the host cell secretory pathway, which induces the intracellular retention of viral glycoproteins and favors assembly of viral particles. Creates a pore in acidic organelles and releases Ca(2+) and H(+) in the cytoplasm of infected cells, leading to a productive viral infection. High levels of cytoplasmic Ca(2+) may trigger membrane trafficking and transport of viral ER-associated proteins to viroplasms, sites of viral genome replication. This ionic imbalance induces the assembly of the inflammasome complex, which triggers the maturation of pro-IL-1beta into IL-1beta through the action of caspase-1. Targets also host mitochondria and induces mitochondrial depolarization. In addition of its role as a viroporin, acts as a lipid raft adhesion factor. Its function is as follows. Cysteine protease required for the proteolytic auto-cleavage between the non-structural proteins NS2 and NS3. The N-terminus of NS3 is required for the function of NS2 protease (active region NS2-3). Promotes the initiation of viral particle assembly by mediating the interaction between structural and non-structural proteins. Functionally, displays three enzymatic activities: serine protease with a chymotrypsin-like fold, NTPase and RNA helicase. NS3 serine protease, in association with NS4A, is responsible for the cleavages of NS3-NS4A, NS4A-NS4B, NS4B-NS5A and NS5A-NS5B. The NS3/NS4A complex prevents phosphorylation of host IRF3, thus preventing the establishment of dsRNA induced antiviral state. The NS3/NS4A complex induces host amino acid transporter component SLC3A2, thus contributing to HCV propagation. NS3 RNA helicase binds to RNA and unwinds both dsDNA and dsRNA in the 3' to 5' direction, and likely resolves RNA complicated stable secondary structures in the template strand. Binds a single ATP and catalyzes the unzipping of a single base pair of dsRNA. Inhibits host antiviral proteins TBK1 and IRF3 thereby preventing the establishment of an antiviral state. Cleaves host MAVS/CARDIF thereby preventing the establishment of an antiviral state. Cleaves host TICAM1/TRIF, thereby disrupting TLR3 signaling and preventing the establishment of an antiviral state. In terms of biological role, peptide cofactor which forms a non-covalent complex with the N-terminal of NS3 serine protease. The NS3/NS4A complex prevents phosphorylation of host IRF3, thus preventing the establishment of dsRNA induced antiviral state. The NS3/NS4A complex induces host amino acid transporter component SLC3A2, thus contributing to HCV propagation. Induces a specific membrane alteration that serves as a scaffold for the virus replication complex. This membrane alteration gives rise to the so-called ER-derived membranous web that contains the replication complex. NS4B self-interaction contributes to its function in membranous web formation. Promotes host TRIF protein degradation in a CASP8-dependent manner thereby inhibiting host TLR3-mediated interferon signaling. Disrupts the interaction between STING and TBK1 contributing to the inhibition of interferon signaling. Its function is as follows. Phosphorylated protein that is indispensable for viral replication and assembly. Both hypo- and hyperphosphorylated states are required for the viral life cycle. The hyperphosphorylated form of NS5A is an inhibitor of viral replication. Involved in RNA-binding and especially in binding to the viral genome. Zinc is essential for RNA-binding. Participates in the viral particle production as a result of its interaction with the mature viral core protein. Its interaction with host VAPB may target the viral replication complex to vesicles. Down-regulates viral IRES translation initiation. Mediates interferon resistance, presumably by interacting with and inhibiting host EIF2AK2/PKR. Prevents BIN1-induced apoptosis. Acts as a transcriptional activator of some host genes important for viral replication when localized in the nucleus. Via the interaction with host PACSIN2, modulates lipid droplet formation in order to promote virion assembly. Modulates TNFRSF21/DR6 signaling pathway for viral propagation. Functionally, RNA-dependent RNA polymerase that performs primer-template recognition and RNA synthesis during viral replication. Initiates RNA transcription/replication at a flavin adenine dinucleotide (FAD), resulting in a 5'- FAD cap on viral RNAs. In this way, recognition of viral 5' RNA by host pattern recognition receptors can be bypassed, thereby evading activation of antiviral pathways. In Hepatitis C virus genotype 1b (isolate Taiwan) (HCV), this protein is Genome polyprotein.